The primary structure comprises 119 residues: Beta-2-microglobulin (119 aa).

Residues 1-20 form the signal peptide; sequence MARFVVVALLVLLSLSGLEA. Residues 25–114 enclose the Ig-like C1-type domain; that stretch reads PKIQVYSRHP…VTLSTPKTVK (90 aa). Cys-45 and Cys-100 are disulfide-bonded.

This sequence belongs to the beta-2-microglobulin family. In terms of assembly, heterodimer of an alpha chain and a beta chain. Beta-2-microglobulin is the beta-chain of major histocompatibility complex class I molecules.

Its subcellular location is the secreted. In terms of biological role, component of the class I major histocompatibility complex (MHC). Involved in the presentation of peptide antigens to the immune system. The chain is Beta-2-microglobulin (B2M) from Aotus azarae (Azara's night monkey).